The following is a 269-amino-acid chain: 4-hydroxy-tetrahydrodipicolinate reductase (269 aa).

Residues 9–14 (GAGGRM) and E35 each bind NAD(+). R36 is a binding site for NADP(+). Residues 98–100 (GTT) and 122–125 (ASNY) each bind NAD(+). Catalysis depends on H155, which acts as the Proton donor/acceptor. Residue H156 coordinates (S)-2,3,4,5-tetrahydrodipicolinate. Residue K159 is the Proton donor of the active site. 165-166 (GT) is a (S)-2,3,4,5-tetrahydrodipicolinate binding site.

Belongs to the DapB family.

The protein localises to the cytoplasm. It carries out the reaction (S)-2,3,4,5-tetrahydrodipicolinate + NAD(+) + H2O = (2S,4S)-4-hydroxy-2,3,4,5-tetrahydrodipicolinate + NADH + H(+). It catalyses the reaction (S)-2,3,4,5-tetrahydrodipicolinate + NADP(+) + H2O = (2S,4S)-4-hydroxy-2,3,4,5-tetrahydrodipicolinate + NADPH + H(+). It functions in the pathway amino-acid biosynthesis; L-lysine biosynthesis via DAP pathway; (S)-tetrahydrodipicolinate from L-aspartate: step 4/4. Its function is as follows. Catalyzes the conversion of 4-hydroxy-tetrahydrodipicolinate (HTPA) to tetrahydrodipicolinate. This is 4-hydroxy-tetrahydrodipicolinate reductase from Actinobacillus pleuropneumoniae serotype 3 (strain JL03).